The following is a 381-amino-acid chain: DNA double-strand break repair protein Mre11 (381 aa).

Positions 9, 11, 50, and 85 each coordinate Mn(2+). Residue His86 is the Proton donor of the active site. The Mn(2+) site is built by His156, His187, and His189.

This sequence belongs to the MRE11/RAD32 family. As to quaternary structure, homodimer. Forms a heterotetramer composed of two Mre11 subunits and two Rad50 subunits. It depends on Mn(2+) as a cofactor.

Its activity is regulated as follows. Nuclease activity is regulated by Rad50. Its function is as follows. Part of the Rad50/Mre11 complex, which is involved in the early steps of DNA double-strand break (DSB) repair. The complex may facilitate opening of the processed DNA ends to aid in the recruitment of HerA and NurA. Mre11 binds to DSB ends and has both double-stranded 3'-5' exonuclease activity and single-stranded endonuclease activity. This is DNA double-strand break repair protein Mre11 from Saccharolobus solfataricus (strain ATCC 35092 / DSM 1617 / JCM 11322 / P2) (Sulfolobus solfataricus).